A 130-amino-acid chain; its full sequence is Small ribosomal subunit protein uS11 (130 aa).

The protein belongs to the universal ribosomal protein uS11 family. As to quaternary structure, part of the 30S ribosomal subunit. Interacts with proteins S7 and S18. Binds to IF-3.

Its function is as follows. Located on the platform of the 30S subunit, it bridges several disparate RNA helices of the 16S rRNA. Forms part of the Shine-Dalgarno cleft in the 70S ribosome. The protein is Small ribosomal subunit protein uS11 of Moorella thermoacetica (strain ATCC 39073 / JCM 9320).